We begin with the raw amino-acid sequence, 558 residues long: Cyclomaltodextrinase (558 aa).

3 residues coordinate Ca(2+): Asn-143, Gly-168, and Asp-170. The substrate site is built by His-243 and Arg-323. Residue Asp-325 is the Nucleophile of the active site. The Proton donor role is filled by Glu-354. Residues 420–421 (HD), Asp-465, and Arg-469 each bind substrate.

This sequence belongs to the glycosyl hydrolase 13 family. In terms of assembly, monomer. Depending on the pH of the solution, exists as a monomer, a homodimer or as an assembly of six homodimers forming a dodecamer, which is catalytically the most efficient form of the enzyme. Ca(2+) is required as a cofactor.

It carries out the reaction cyclomaltodextrin + H2O = linear maltodextrin. It catalyses the reaction Hydrolysis of pullulan to panose (6-alpha-D-glucosylmaltose).. Its activity is regulated as follows. Hydrolysis of beta-cyclodextrin is inhibited by Cu(2+), Zn(2+) and Ag(+), and activated by Ca(2+), EGTA and EDTA. Activity is increased over twofold in the presence of 5 mM EDTA. Competitively inhibited by acarbose and methyl 6-amino-6-deoxy-alpha-D-glucopyranoside by reducing the rate of the ring opening step of the reaction. Its function is as follows. Hydrolyzes alpha-, beta- and gamma-cyclodextrins and the resulting linear maltodextrins, with the highest activity with beta-cyclodextrin (cyclomaltoheptaose). Soluble starch is hydrolyzed slowly, but it is nevertheless preferred over pullulan as a substrate. Is able to hydrolyze amylose and amylopectin, with a very strong preference for amylose, with maltose and glucose as the main products. Maltose and glucose are the main hydrolysis products of cyclomaltodextrins, maltodextrins and starch, whereas panose is the main hydrolysis product of pullulan. Acarbose is partially hydrolyzed to glucose and pseudotrisaccharide. No activity with maltose as substrate. Has transglycosylating activity with high concentrations of maltotriose, maltotetraose and starch. The sequence is that of Cyclomaltodextrinase from Bacillus sp.